A 537-amino-acid polypeptide reads, in one-letter code: CTP synthase (537 aa).

Positions 1 to 268 (MPFKCIFLTG…STFITEKLGL (268 aa)) are amidoligase domain. CTP is bound at residue Ser-14. Residue Ser-14 participates in UTP binding. Residue 15–20 (SLGKGL) coordinates ATP. Residue Tyr-55 participates in L-glutamine binding. Asp-72 provides a ligand contact to ATP. Mg(2+) is bound by residues Asp-72 and Glu-142. CTP is bound by residues 149 to 151 (DIE), 188 to 193 (KTKPTQ), and Lys-224. Residues 188–193 (KTKPTQ) and Lys-224 contribute to the UTP site. Residues 294–533 (RIGLVGKYVQ…IQAALLYSKN (240 aa)) enclose the Glutamine amidotransferase type-1 domain. An L-glutamine-binding site is contributed by Gly-353. Cys-380 (nucleophile; for glutamine hydrolysis) is an active-site residue. L-glutamine is bound by residues 381 to 384 (LGMQ), Glu-404, and Arg-461. Active-site residues include His-506 and Glu-508.

Belongs to the CTP synthase family. In terms of assembly, homotetramer.

It carries out the reaction UTP + L-glutamine + ATP + H2O = CTP + L-glutamate + ADP + phosphate + 2 H(+). The catalysed reaction is L-glutamine + H2O = L-glutamate + NH4(+). The enzyme catalyses UTP + NH4(+) + ATP = CTP + ADP + phosphate + 2 H(+). It functions in the pathway pyrimidine metabolism; CTP biosynthesis via de novo pathway; CTP from UDP: step 2/2. Its activity is regulated as follows. Allosterically activated by GTP, when glutamine is the substrate; GTP has no effect on the reaction when ammonia is the substrate. The allosteric effector GTP functions by stabilizing the protein conformation that binds the tetrahedral intermediate(s) formed during glutamine hydrolysis. Inhibited by the product CTP, via allosteric rather than competitive inhibition. In terms of biological role, catalyzes the ATP-dependent amination of UTP to CTP with either L-glutamine or ammonia as the source of nitrogen. Regulates intracellular CTP levels through interactions with the four ribonucleotide triphosphates. The chain is CTP synthase from Chlamydia caviae (strain ATCC VR-813 / DSM 19441 / 03DC25 / GPIC) (Chlamydophila caviae).